A 516-amino-acid polypeptide reads, in one-letter code: Maturase K (516 aa).

This sequence belongs to the intron maturase 2 family. MatK subfamily.

It is found in the plastid. Its subcellular location is the chloroplast. Its function is as follows. Usually encoded in the trnK tRNA gene intron. Probably assists in splicing its own and other chloroplast group II introns. The sequence is that of Maturase K from Medeola virginiana (Indian cucumber root).